We begin with the raw amino-acid sequence, 139 residues long: Large ribosomal subunit protein uL16 (139 aa).

This sequence belongs to the universal ribosomal protein uL16 family. In terms of assembly, part of the 50S ribosomal subunit.

In terms of biological role, binds 23S rRNA and is also seen to make contacts with the A and possibly P site tRNAs. The chain is Large ribosomal subunit protein uL16 from Mycoplasma pneumoniae (strain ATCC 29342 / M129 / Subtype 1) (Mycoplasmoides pneumoniae).